Consider the following 373-residue polypeptide: Extensin-1 (373 aa).

The signal sequence occupies residues 1-19; that stretch reads MASFLVLAFSLAFVSQTTA. Repeat copies occupy residues 25-33, 34-40, 41-49, 50-56, 57-65, 66-72, 73-81, 82-88, 97-105, 106-112, 113-121, 122-128, 129-137, 138-144, 145-153, 154-160, 161-169, 170-176, 177-185, 186-192, 193-201, 202-208, 209-217, 218-224, 225-233, 234-240, 241-248, 249-256, 257-264, 265-272, 273-280, 281-288, 289-296, 297-304, 305-312, and 313-320. The 13 X 9 AA repeats of S-P-P-P-P-V-K-[HY]-Y stretch occupies residues 25–233; that stretch reads SPPPPVKHYS…KSPPPPVKYY (209 aa). Residues 34–240 form a 13 X 7 AA repeats of S-P-P-P-V-Y-K region; that stretch reads SPPPVYKSPP…KYYSPPPVYK (207 aa). The interval 241–312 is 5 X 8 AA repeats of S-P-P-P-P-V-H-Y; that stretch reads SPPPPVHYSP…YHSPPPPVHY (72 aa). The segment at 249–320 is 5 X 8 AA repeats of S-P-P-P-V-V-Y-H; that stretch reads SPPPVVYHSP…HYSPPPVVYH (72 aa). Isodityrosine cross-linking stretches follow at residues 329–332 and 363–366; these read YEYK and YLYK. A disordered region spans residues 349–373; it reads PPPPVHHYSPPHQPYLYKSPPPPHY.

Belongs to the extensin family. In terms of processing, extensins contain a characteristic repeat of the pentapeptide Ser-Pro(4). For this particular extensin, a typical repeat of Ser-Pro(3) is found. In both cases, the proline residues are hydroxylated and then O-glycosylated (arabinosylation). Synthetised as soluble proteins which become insolubilised in the cell wall through the intermolecular cross-linking of Tyr on adjacent monomers. Isodityrosine (IDT) stabilizes and makes rigid the part of the polypeptide where IDT functional sites are present. In terms of tissue distribution, predominantly expressed in the roots. Not detected in the leaves, nor in flowers or flower buds. Wounding reverses this pattern, turning on the gene in the leaves and repressing it in the roots.

The protein resides in the secreted. Its subcellular location is the primary cell wall. Functionally, structural component which strengthens the primary cell wall. The polypeptide is Extensin-1 (Arabidopsis thaliana (Mouse-ear cress)).